The primary structure comprises 205 residues: Small ribosomal subunit protein uS4 (205 aa).

A compositionally biased stretch (basic residues) spans 1-12 (MSKRIQAKHKLD). Residues 1-49 (MSKRIQAKHKLDRRMGQNIWGRPKSPVNRREYGPGQHGQRRKGKMSDFG) form a disordered region. Residues 94–155 (RRLDAVVYRA…SSRQLEIVIV (62 aa)) enclose the S4 RNA-binding domain.

This sequence belongs to the universal ribosomal protein uS4 family. As to quaternary structure, part of the 30S ribosomal subunit. Contacts protein S5. The interaction surface between S4 and S5 is involved in control of translational fidelity.

In terms of biological role, one of the primary rRNA binding proteins, it binds directly to 16S rRNA where it nucleates assembly of the body of the 30S subunit. Its function is as follows. With S5 and S12 plays an important role in translational accuracy. The polypeptide is Small ribosomal subunit protein uS4 (Methylobacterium radiotolerans (strain ATCC 27329 / DSM 1819 / JCM 2831 / NBRC 15690 / NCIMB 10815 / 0-1)).